The sequence spans 79 residues: DNA-directed RNA polymerase subunit omega (79 aa).

This sequence belongs to the RNA polymerase subunit omega family. The RNAP catalytic core consists of 2 alpha, 1 beta, 1 beta' and 1 omega subunit. When a sigma factor is associated with the core the holoenzyme is formed, which can initiate transcription.

The enzyme catalyses RNA(n) + a ribonucleoside 5'-triphosphate = RNA(n+1) + diphosphate. Its function is as follows. Promotes RNA polymerase assembly. Latches the N- and C-terminal regions of the beta' subunit thereby facilitating its interaction with the beta and alpha subunits. This is DNA-directed RNA polymerase subunit omega from Thermotoga neapolitana (strain ATCC 49049 / DSM 4359 / NBRC 107923 / NS-E).